The chain runs to 861 residues: DNA mismatch repair protein MutS (861 aa).

618 to 625 is a binding site for ATP; sequence GPNMGGKS.

It belongs to the DNA mismatch repair MutS family.

Its function is as follows. This protein is involved in the repair of mismatches in DNA. It is possible that it carries out the mismatch recognition step. This protein has a weak ATPase activity. The sequence is that of DNA mismatch repair protein MutS from Shewanella frigidimarina (strain NCIMB 400).